We begin with the raw amino-acid sequence, 322 residues long: Quinolinate synthase (322 aa).

Iminosuccinate is bound by residues His-38 and Ser-55. Cys-100 contacts [4Fe-4S] cluster. Iminosuccinate-binding positions include 126-128 (YIN) and Ser-143. Cys-186 is a binding site for [4Fe-4S] cluster. Iminosuccinate-binding positions include 212–214 (HPE) and Thr-229. Cys-279 contributes to the [4Fe-4S] cluster binding site.

Belongs to the quinolinate synthase family. Type 2 subfamily. [4Fe-4S] cluster is required as a cofactor.

The protein resides in the cytoplasm. The enzyme catalyses iminosuccinate + dihydroxyacetone phosphate = quinolinate + phosphate + 2 H2O + H(+). It participates in cofactor biosynthesis; NAD(+) biosynthesis; quinolinate from iminoaspartate: step 1/1. Catalyzes the condensation of iminoaspartate with dihydroxyacetone phosphate to form quinolinate. This is Quinolinate synthase from Aquifex aeolicus (strain VF5).